A 382-amino-acid chain; its full sequence is F-box/kelch-repeat protein At3g16580 (382 aa).

One can recognise an F-box domain in the interval 9–55; sequence WEFSLSLPWELIEEILSRVPPESLLRFKTVSKQWNALFRDKTFINNH. Kelch repeat units follow at residues 150-196 and 334-381; these read KIFA…NIYT and WIYV…AELQ.

In Arabidopsis thaliana (Mouse-ear cress), this protein is F-box/kelch-repeat protein At3g16580.